A 273-amino-acid chain; its full sequence is 5-deoxy-glucuronate isomerase (273 aa).

It belongs to the isomerase IolB family.

It catalyses the reaction 5-deoxy-D-glucuronate = 5-dehydro-2-deoxy-D-gluconate. The protein operates within polyol metabolism; myo-inositol degradation into acetyl-CoA; acetyl-CoA from myo-inositol: step 4/7. Its function is as follows. Involved in the isomerization of 5-deoxy-glucuronate (5DG) to 5-dehydro-2-deoxy-D-gluconate (DKG or 2-deoxy-5-keto-D-gluconate). In Listeria innocua serovar 6a (strain ATCC BAA-680 / CLIP 11262), this protein is 5-deoxy-glucuronate isomerase.